A 1166-amino-acid chain; its full sequence is Peroxisomal ATPase PEX6 (1166 aa).

It belongs to the AAA ATPase family. Interacts with PEX1; forming the PEX1-PEX6 AAA ATPase complex, which is composed of a heterohexamer formed by a trimer of PEX1-PEX6 dimers.

The protein resides in the membrane. It catalyses the reaction ATP + H2O = ADP + phosphate + H(+). Functionally, component of the PEX1-PEX6 AAA ATPase complex involved in peroxisome biosynthesis. The complex acts as a protein dislocase complex that mediates the ATP-dependent extraction of the PEX5 receptor from peroxisomal membranes, an essential step for PEX5 recycling. Specifically recognizes PEX5 monoubiquitinated at 'Cys-6', and pulls it out of the peroxisome lumen through the PEX2-PEX10-PEX12 retrotranslocation channel. Extraction by the PEX1-PEX6 AAA ATPase complex is accompanied by unfolding of the TPR repeats and release of bound cargo from PEX5. The polypeptide is Peroxisomal ATPase PEX6 (Komagataella phaffii (strain GS115 / ATCC 20864) (Yeast)).